The chain runs to 140 residues: Protein NrdI (140 aa).

Belongs to the NrdI family.

Probably involved in ribonucleotide reductase function. The protein is Protein NrdI of Ruegeria sp. (strain TM1040) (Silicibacter sp.).